Consider the following 70-residue polypeptide: Protein SlyX homolog (70 aa).

Belongs to the SlyX family.

This Shewanella sediminis (strain HAW-EB3) protein is Protein SlyX homolog.